The sequence spans 379 residues: 2-nitroimidazole nitrohydrolase (379 aa).

Cysteine 357 acts as the Amidino-cysteine intermediate in catalysis.

It belongs to the arginine deiminase family.

The catalysed reaction is 2-nitroimidazole + H2O = 1,3-dihydro-2H-imidazol-2-one + nitrite + H(+). Functionally, involved in the biodegradation of 2-Nitroimidazole (2NI) which is a natural antibiotic and an analog of the synthetic nitroimidazoles used for treatment of tuberculosis, Chagas disease (also called American Trypanosomiasis) and cancer. Catalyzes the hydrolytic denitration of 2NI to produce imidazol-2-one and nitrite. It is also active against the 2NI synthetic derivative benznidazole. NnhA confers drug resistance to 2NI. In Mycobacterium sp. (strain JS330), this protein is 2-nitroimidazole nitrohydrolase (nnhA).